The primary structure comprises 536 residues: GMP synthase [glutamine-hydrolyzing] (536 aa).

Residues 19-212 form the Glutamine amidotransferase type-1 domain; the sequence is RILILDFGSQ…VHEICDCAGS (194 aa). The active-site Nucleophile is the Cys-96. Active-site residues include His-186 and Glu-188. The GMPS ATP-PPase domain maps to 213 to 411; that stretch reads WTPDNIIDMR…LGLPAKMINR (199 aa). 240 to 246 provides a ligand contact to ATP; the sequence is SGGVDSS.

In terms of assembly, homodimer.

The catalysed reaction is XMP + L-glutamine + ATP + H2O = GMP + L-glutamate + AMP + diphosphate + 2 H(+). The protein operates within purine metabolism; GMP biosynthesis; GMP from XMP (L-Gln route): step 1/1. In terms of biological role, catalyzes the synthesis of GMP from XMP. The sequence is that of GMP synthase [glutamine-hydrolyzing] from Psychrobacter arcticus (strain DSM 17307 / VKM B-2377 / 273-4).